A 182-amino-acid chain; its full sequence is Urease accessory protein UreE (182 aa).

Residues 128 to 182 (PRTEPFRPEGGAYGHGRTLGHDHGPAQGHGHDHPHVHVHISHKPDEDETPDADPA) form a disordered region. A compositionally biased stretch (basic and acidic residues) spans 146 to 162 (LGHDHGPAQGHGHDHPH). Residues 173-182 (EDETPDADPA) are compositionally biased toward acidic residues.

Belongs to the UreE family.

The protein resides in the cytoplasm. Involved in urease metallocenter assembly. Binds nickel. Probably functions as a nickel donor during metallocenter assembly. This chain is Urease accessory protein UreE, found in Cereibacter sphaeroides (strain ATCC 17023 / DSM 158 / JCM 6121 / CCUG 31486 / LMG 2827 / NBRC 12203 / NCIMB 8253 / ATH 2.4.1.) (Rhodobacter sphaeroides).